Consider the following 505-residue polypeptide: Lysine--tRNA ligase (505 aa).

Mg(2+) contacts are provided by E409 and E416.

This sequence belongs to the class-II aminoacyl-tRNA synthetase family. As to quaternary structure, homodimer. Requires Mg(2+) as cofactor.

Its subcellular location is the cytoplasm. The enzyme catalyses tRNA(Lys) + L-lysine + ATP = L-lysyl-tRNA(Lys) + AMP + diphosphate. The polypeptide is Lysine--tRNA ligase (Latilactobacillus sakei subsp. sakei (strain 23K) (Lactobacillus sakei subsp. sakei)).